The sequence spans 245 residues: Protein mlo1 (245 aa).

In terms of domain architecture, SAP spans 4-38 (YKSLKVAELREKLAEKGLSTAGNKAELVSRLTAAT). The disordered stretch occupies residues 32–245 (SRLTAATESN…AERFGVAAKN (214 aa)). Residues 37 to 52 (ATESNDENTSNNNATD) show a composition bias toward low complexity. Acidic residues predominate over residues 58-70 (PPEDDIDWGDMEN). Residues 109 to 118 (TSQAPETSTG) show a composition bias toward polar residues. Positions 119–130 (AEEHQETTEESK) are enriched in basic and acidic residues. Position 139 is a phosphoserine (Ser139). Positions 182-196 (SSNNKNHNQSKNPQN) are enriched in low complexity.

The protein belongs to the SAP domain-containing ribonucleoprotein family.

In Schizosaccharomyces pombe (strain 972 / ATCC 24843) (Fission yeast), this protein is Protein mlo1 (mlo1).